We begin with the raw amino-acid sequence, 266 residues long: Coiled-coil domain-containing glutamate-rich protein 2 (266 aa).

The N-terminal stretch at 1 to 23 is a signal peptide; it reads MPPRGPASELLLLRLLLLGAATA. 4 stretches are compositionally biased toward basic and acidic residues: residues 90–100, 154–188, 204–213, and 221–266; these read EAGKMRSSQEV, LWQR…EKGV, GGGERREDLP, and QPEA…RREG. Positions 90 to 266 are disordered; it reads EAGKMRSSQE…TLGEQLRREG (177 aa).

In terms of tissue distribution, expressed at higher levels in fetal brain and skeletal muscle. Lower expression is detected in fetal kidney, liver, spleen, thymus, heart and lung.

It is found in the secreted. The sequence is that of Coiled-coil domain-containing glutamate-rich protein 2 (CCER2) from Homo sapiens (Human).